Here is a 174-residue protein sequence, read N- to C-terminus: Histone deacetylase complex subunit SAP30 homolog (174 aa).

The Atypical zinc-finger motif lies at 22-70; it reads CCLLDDGERCRKQAGNASYSKRIQKTVTQRRLKLSIDSHARHIYICDFH.

It belongs to the SAP30 family. As to quaternary structure, component of the class 1 Sin3-histone deacetylase complex (HDAC).

Its subcellular location is the nucleus. In terms of biological role, required for the function of the class 1 Sin3-histone deacetylase complex (HDAC). The sequence is that of Histone deacetylase complex subunit SAP30 homolog from Anopheles gambiae (African malaria mosquito).